The chain runs to 286 residues: Shikimate dehydrogenase (NADP(+)) (286 aa).

Shikimate-binding positions include 19-21 (SLS) and Thr66. Catalysis depends on Lys70, which acts as the Proton acceptor. 2 residues coordinate shikimate: Asn91 and Asp107. NADP(+) contacts are provided by residues 129–133 (GSGGA) and Leu229. Tyr231 is a shikimate binding site. Position 252 (Gly252) interacts with NADP(+).

It belongs to the shikimate dehydrogenase family. In terms of assembly, homodimer.

The enzyme catalyses shikimate + NADP(+) = 3-dehydroshikimate + NADPH + H(+). The protein operates within metabolic intermediate biosynthesis; chorismate biosynthesis; chorismate from D-erythrose 4-phosphate and phosphoenolpyruvate: step 4/7. In terms of biological role, involved in the biosynthesis of the chorismate, which leads to the biosynthesis of aromatic amino acids. Catalyzes the reversible NADPH linked reduction of 3-dehydroshikimate (DHSA) to yield shikimate (SA). The chain is Shikimate dehydrogenase (NADP(+)) from Prochlorococcus marinus (strain MIT 9312).